A 354-amino-acid chain; its full sequence is Probable protein phosphatase 2C 27 (354 aa).

The 266-residue stretch at 54 to 319 (RSGDWSDIGG…DNLTAVMVSF (266 aa)) folds into the PPM-type phosphatase domain. The Mn(2+) site is built by D98, G99, D267, and D310.

It belongs to the PP2C family. Requires Mg(2+) as cofactor. Mn(2+) is required as a cofactor.

It carries out the reaction O-phospho-L-seryl-[protein] + H2O = L-seryl-[protein] + phosphate. It catalyses the reaction O-phospho-L-threonyl-[protein] + H2O = L-threonyl-[protein] + phosphate. The chain is Probable protein phosphatase 2C 27 from Oryza sativa subsp. japonica (Rice).